Reading from the N-terminus, the 301-residue chain is Glycine--tRNA ligase alpha subunit (301 aa).

This sequence belongs to the class-II aminoacyl-tRNA synthetase family. In terms of assembly, tetramer of two alpha and two beta subunits.

It localises to the cytoplasm. The catalysed reaction is tRNA(Gly) + glycine + ATP = glycyl-tRNA(Gly) + AMP + diphosphate. This is Glycine--tRNA ligase alpha subunit from Actinobacillus pleuropneumoniae serotype 5b (strain L20).